We begin with the raw amino-acid sequence, 460 residues long: Exodeoxyribonuclease 7 large subunit (460 aa).

The interval 438 to 460 is disordered; that stretch reads ARVEKVNREEEKQSGSQKNGTRD. A compositionally biased stretch (basic and acidic residues) spans 439-450; the sequence is RVEKVNREEEKQ. Polar residues predominate over residues 451–460; the sequence is SGSQKNGTRD.

The protein belongs to the XseA family. In terms of assembly, heterooligomer composed of large and small subunits.

The protein localises to the cytoplasm. It catalyses the reaction Exonucleolytic cleavage in either 5'- to 3'- or 3'- to 5'-direction to yield nucleoside 5'-phosphates.. Bidirectionally degrades single-stranded DNA into large acid-insoluble oligonucleotides, which are then degraded further into small acid-soluble oligonucleotides. This chain is Exodeoxyribonuclease 7 large subunit, found in Brevibacillus brevis (strain 47 / JCM 6285 / NBRC 100599).